Reading from the N-terminus, the 207-residue chain is MEETLNQEKMVEEIAKRIREILEILGENPDREGLRETPLRVARALLEMTSGLRTPQPQIKTFNLSEDGISEVEDQIILVKNIGFSSLCEHHLLPIIGKVHVAYIVGQERKVAGFSKIIRIVNYYASRPQIQERLVQQIADAIMNSDIHPKGVMVIGDALHMCAYVRGVKDREASLLSVATRGLFKNNVSLRNYVFRLLETSKKTSLL.

Residues Cys-88, His-91, and Cys-162 each coordinate Zn(2+).

This sequence belongs to the GTP cyclohydrolase I family. Toroid-shaped homodecamer, composed of two pentamers of five dimers.

The catalysed reaction is GTP + H2O = 7,8-dihydroneopterin 3'-triphosphate + formate + H(+). Its pathway is cofactor biosynthesis; 7,8-dihydroneopterin triphosphate biosynthesis; 7,8-dihydroneopterin triphosphate from GTP: step 1/1. The polypeptide is GTP cyclohydrolase 1 (Sulfurisphaera tokodaii (strain DSM 16993 / JCM 10545 / NBRC 100140 / 7) (Sulfolobus tokodaii)).